A 432-amino-acid chain; its full sequence is Amino-acid acetyltransferase (432 aa).

Positions 286 to 425 constitute an N-acetyltransferase domain; the sequence is EKLREATIED…ASLYNYQRQS (140 aa).

The protein belongs to the acetyltransferase family. ArgA subfamily.

It is found in the cytoplasm. The catalysed reaction is L-glutamate + acetyl-CoA = N-acetyl-L-glutamate + CoA + H(+). The protein operates within amino-acid biosynthesis; L-arginine biosynthesis; N(2)-acetyl-L-ornithine from L-glutamate: step 1/4. In Azotobacter vinelandii (strain DJ / ATCC BAA-1303), this protein is Amino-acid acetyltransferase.